The primary structure comprises 72 residues: Prokaryotic ubiquitin-like protein Pup (72 aa).

Positions 1 to 10 (MATKDTGGGQ) are enriched in gly residues. Residues 1-45 (MATKDTGGGQQKATRSTEEVEEQAQDAQASEDLAERQEKLSDDVD) are disordered. Positions 10-60 (QQKATRSTEEVEEQAQDAQASEDLAERQEKLSDDVDSVLDEIDDVLEENAE) form a coiled coil. The ARC ATPase binding stretch occupies residues 28-66 (QASEDLAERQEKLSDDVDSVLDEIDDVLEENAEDFVRSF). Residues 33-42 (LAERQEKLSD) show a composition bias toward basic and acidic residues. Q72 carries the post-translational modification Deamidated glutamine. An Isoglutamyl lysine isopeptide (Gln-Lys) (interchain with K-? in acceptor proteins) cross-link involves residue Q72.

This sequence belongs to the prokaryotic ubiquitin-like protein family. In terms of assembly, strongly interacts with the proteasome-associated ATPase ARC through a hydrophobic interface; the interacting region of Pup lies in its C-terminal half. There is one Pup binding site per ARC hexamer ring. Is modified by deamidation of its C-terminal glutamine to glutamate by the deamidase Dop, a prerequisite to the subsequent pupylation process.

Its pathway is protein degradation; proteasomal Pup-dependent pathway. Its function is as follows. Protein modifier that is covalently attached to lysine residues of substrate proteins, thereby targeting them for proteasomal degradation. The tagging system is termed pupylation. The polypeptide is Prokaryotic ubiquitin-like protein Pup (Streptomyces griseus subsp. griseus (strain JCM 4626 / CBS 651.72 / NBRC 13350 / KCC S-0626 / ISP 5235)).